The primary structure comprises 466 residues: MKTRQNVYELKDDTLSWYSRAVEEMKSRDINDPTSWWYQGAIHGYATYPSALTYWHDATGYPPSQQTVNSGFWNRCQHGTWYFLPWHRMYLFYFEEIVAKAIRDMGGPADWTLPYWNYCEAYNTSASPSNQQQALQIPPEFGSSQGPNADFASLWIKNRRNYVLNKNNVNPWPAMNEAEFTNSGGDISFGGGVTGFAHSGGQTGQLESLPHNVVHTDINGAMGNPDTAALDPIFWLHHANIDRLWQVWLAQAGRSNPVVNAWKDFRFKFHDANGQPVEIAVKDVETTQLLGYVYTPAFPLSSTTPARRSVPAMDVVGATSASFSVGDHMAPLDLTMVPQPARGARLLAARGGDEKRTILRISNVKGKGATSPIDLFITNRDNEEGNEENFVGCIGLFGLENASTPSVESDGSGLNFAIDISDTINKLRQRDDWDEDNIRVQLIPQSKQDSDVEINVGRVSLHSEID.

Residues histidine 43, histidine 78, histidine 87, histidine 211, histidine 215, and histidine 238 each contribute to the Cu cation site.

The protein belongs to the tyrosinase family. In terms of assembly, monomer. Formation of a dimer is observed when the protein is in its holo-form. Requires Cu(2+) as cofactor. In terms of processing, in vitro, the C-terminal lid-domain is slowly cleaved off in an autoprocessive time dependent manner, leading to the formation of cleaved-HcTyr1. The processing rate is not influenced by factors such as pH and added metal ions.

The catalysed reaction is L-tyrosine + O2 = L-dopaquinone + H2O. It carries out the reaction 2 L-tyrosine + O2 = 2 L-dopa. It catalyses the reaction 2 L-dopa + O2 = 2 L-dopaquinone + 2 H2O. With respect to regulation, cleavage of the lid-domain increases activity levels, affinity for substrate and turnover rate. Exhibits high saline tolerance. In terms of biological role, copper-containing oxidase that catalyzes the conversion of L-tyrosine to L-dopa and then to L-dopaquinone. Can use various phenols such as p-coumaric acid, phenol, pyrocatechol, syringol or pyrogallol. Accepts several of the constituents of lignin and potentially participates in lignin functionalization. In Hahella sp. (strain CCB-MM4), this protein is Tyrosinase HcTyr1.